Here is a 740-residue protein sequence, read N- to C-terminus: NAD(P)H-quinone oxidoreductase subunit 5, chloroplastic (740 aa).

Transmembrane regions (helical) follow at residues W9–F29, W40–I60, I89–I109, F125–I145, I147–T167, G185–F205, N219–A239, T258–A278, V286–A306, L327–I347, A354–S374, I396–S416, W425–Y445, L543–F563, V602–I622, and Y718–L738.

Belongs to the complex I subunit 5 family. NDH is composed of at least 16 different subunits, 5 of which are encoded in the nucleus.

The protein resides in the plastid. The protein localises to the chloroplast thylakoid membrane. It catalyses the reaction a plastoquinone + NADH + (n+1) H(+)(in) = a plastoquinol + NAD(+) + n H(+)(out). The catalysed reaction is a plastoquinone + NADPH + (n+1) H(+)(in) = a plastoquinol + NADP(+) + n H(+)(out). NDH shuttles electrons from NAD(P)H:plastoquinone, via FMN and iron-sulfur (Fe-S) centers, to quinones in the photosynthetic chain and possibly in a chloroplast respiratory chain. The immediate electron acceptor for the enzyme in this species is believed to be plastoquinone. Couples the redox reaction to proton translocation, and thus conserves the redox energy in a proton gradient. The sequence is that of NAD(P)H-quinone oxidoreductase subunit 5, chloroplastic (ndhF) from Atropa belladonna (Belladonna).